Reading from the N-terminus, the 179-residue chain is Large ribosomal subunit protein uL5 (179 aa).

Belongs to the universal ribosomal protein uL5 family. As to quaternary structure, part of the 50S ribosomal subunit; part of the 5S rRNA/L5/L18/L25 subcomplex. Contacts the 5S rRNA and the P site tRNA. Forms a bridge to the 30S subunit in the 70S ribosome.

In terms of biological role, this is one of the proteins that bind and probably mediate the attachment of the 5S RNA into the large ribosomal subunit, where it forms part of the central protuberance. In the 70S ribosome it contacts protein S13 of the 30S subunit (bridge B1b), connecting the 2 subunits; this bridge is implicated in subunit movement. Contacts the P site tRNA; the 5S rRNA and some of its associated proteins might help stabilize positioning of ribosome-bound tRNAs. The protein is Large ribosomal subunit protein uL5 of Cronobacter sakazakii (strain ATCC BAA-894) (Enterobacter sakazakii).